Here is a 557-residue protein sequence, read N- to C-terminus: DNA ligase B (557 aa).

The active-site N6-AMP-lysine intermediate is the Lys-125.

Belongs to the NAD-dependent DNA ligase family. LigB subfamily.

It catalyses the reaction NAD(+) + (deoxyribonucleotide)n-3'-hydroxyl + 5'-phospho-(deoxyribonucleotide)m = (deoxyribonucleotide)n+m + AMP + beta-nicotinamide D-nucleotide.. Functionally, catalyzes the formation of phosphodiester linkages between 5'-phosphoryl and 3'-hydroxyl groups in double-stranded DNA using NAD as a coenzyme and as the energy source for the reaction. This Pseudomonas entomophila (strain L48) protein is DNA ligase B.